A 321-amino-acid polypeptide reads, in one-letter code: MKTIGILTSGGDAPGMNAAIRAVVRTGIYYGLKVKGIMRGYAGLVEDEVIDLNLSSVGDILQKGGTILRTARCEEFKKKEVRKKAYETLQKHGIEGLVVIGGDGSFRGAQLLSEEWNVNTIGIPGTIDNDIPCTDYTIGFDTACNTVIDAINKIRDTATSHERANIIEVMGRNAGYIALYAGLAGGAEMIILPEVEWSIDELCDKITYGIKRGKLHHIIVLAEGVMSAPELAKMIKERLPKLDLRYTILGHIQRGGAPTVMDRVLASQMGARAVELLLENKTKRIISIRNNQIVDDDIDEALSMKKEFNRKLYELSKILSI.

Residue Gly-11 coordinates ATP. Residue 21–25 (RAVVR) coordinates ADP. Residues 72–73 (RC) and 102–105 (GDGS) each bind ATP. Residue Asp-103 participates in Mg(2+) binding. 126-128 (TID) serves as a coordination point for substrate. Catalysis depends on Asp-128, which acts as the Proton acceptor. Arg-155 serves as a coordination point for ADP. Residues Arg-163 and 170–172 (MGR) contribute to the substrate site. ADP is bound by residues 186 to 188 (GAE), Arg-212, and 214 to 216 (KLH). Substrate-binding positions include Glu-223, Arg-245, and 251 to 254 (HIQR).

Belongs to the phosphofructokinase type A (PFKA) family. ATP-dependent PFK group I subfamily. Prokaryotic clade 'B1' sub-subfamily. In terms of assembly, homotetramer. Mg(2+) serves as cofactor.

The protein localises to the cytoplasm. It carries out the reaction beta-D-fructose 6-phosphate + ATP = beta-D-fructose 1,6-bisphosphate + ADP + H(+). It functions in the pathway carbohydrate degradation; glycolysis; D-glyceraldehyde 3-phosphate and glycerone phosphate from D-glucose: step 3/4. Its activity is regulated as follows. Allosterically activated by ADP and other diphosphonucleosides, and allosterically inhibited by phosphoenolpyruvate. Catalyzes the phosphorylation of D-fructose 6-phosphate to fructose 1,6-bisphosphate by ATP, the first committing step of glycolysis. The protein is ATP-dependent 6-phosphofructokinase of Thermoanaerobacter pseudethanolicus (strain ATCC 33223 / 39E) (Clostridium thermohydrosulfuricum).